The primary structure comprises 218 residues: UPF0598 protein C8orf82 homolog (218 aa).

Belongs to the UPF0598 family.

This is UPF0598 protein C8orf82 homolog from Bos taurus (Bovine).